Here is a 341-residue protein sequence, read N- to C-terminus: tRNA N6-adenosine threonylcarbamoyltransferase (341 aa).

Fe cation-binding residues include H111 and H115. Substrate is bound by residues L134–G138, D167, G180, and N276. Position 304 (D304) interacts with Fe cation.

This sequence belongs to the KAE1 / TsaD family. Fe(2+) is required as a cofactor.

The protein resides in the cytoplasm. The catalysed reaction is L-threonylcarbamoyladenylate + adenosine(37) in tRNA = N(6)-L-threonylcarbamoyladenosine(37) in tRNA + AMP + H(+). In terms of biological role, required for the formation of a threonylcarbamoyl group on adenosine at position 37 (t(6)A37) in tRNAs that read codons beginning with adenine. Is involved in the transfer of the threonylcarbamoyl moiety of threonylcarbamoyl-AMP (TC-AMP) to the N6 group of A37, together with TsaE and TsaB. TsaD likely plays a direct catalytic role in this reaction. The sequence is that of tRNA N6-adenosine threonylcarbamoyltransferase from Pseudomonas aeruginosa (strain UCBPP-PA14).